Consider the following 183-residue polypeptide: TATA-box-binding protein 2 (183 aa).

2 repeat units span residues 8 to 84 (IENV…AKKL) and 99 to 177 (VQNI…RQQL).

The protein belongs to the TBP family.

General factor that plays a role in the activation of archaeal genes transcribed by RNA polymerase. Binds specifically to the TATA box promoter element which lies close to the position of transcription initiation. The polypeptide is TATA-box-binding protein 2 (Methanosarcina mazei (strain ATCC BAA-159 / DSM 3647 / Goe1 / Go1 / JCM 11833 / OCM 88) (Methanosarcina frisia)).